The following is a 260-amino-acid chain: Serine hydroxymethyltransferase (260 aa).

An N6-(pyridoxal phosphate)lysine modification is found at Lys60.

The protein belongs to the SHMT family. In terms of assembly, homodimer. Pyridoxal 5'-phosphate serves as cofactor.

It is found in the cytoplasm. The catalysed reaction is (6R)-5,10-methylene-5,6,7,8-tetrahydrofolate + glycine + H2O = (6S)-5,6,7,8-tetrahydrofolate + L-serine. It participates in one-carbon metabolism; tetrahydrofolate interconversion. Its pathway is amino-acid biosynthesis; glycine biosynthesis; glycine from L-serine: step 1/1. In terms of biological role, catalyzes the reversible interconversion of serine and glycine with tetrahydrofolate (THF) serving as the one-carbon carrier. This reaction serves as the major source of one-carbon groups required for the biosynthesis of purines, thymidylate, methionine, and other important biomolecules. Also exhibits THF-independent aldolase activity toward beta-hydroxyamino acids, producing glycine and aldehydes, via a retro-aldol mechanism. This chain is Serine hydroxymethyltransferase, found in Corynebacterium sp. (strain P-1).